A 305-amino-acid polypeptide reads, in one-letter code: uncharacterized protein (305 aa).

A disordered region spans residues 53–185 (SGRIGDGDDG…TGPRSSRTVG (133 aa)). Composition is skewed to basic and acidic residues over residues 95–116 (VEERNLVDRCNRMMNETEERPT) and 128–142 (GSERNGETERPRSEG). Residues 161 to 171 (GNTQAPSQSAE) show a composition bias toward polar residues. The segment at 260–302 (CAICMSNFIKNQRLRVLPCDHRFHVGCVDKWLLGHSNKCPVCR) adopts an RING-type; atypical zinc-finger fold.

This is an uncharacterized protein from Encephalitozoon cuniculi (strain GB-M1) (Microsporidian parasite).